We begin with the raw amino-acid sequence, 313 residues long: Aspartate carbamoyltransferase catalytic subunit (313 aa).

The carbamoyl phosphate site is built by arginine 53 and threonine 54. Lysine 82 contributes to the L-aspartate binding site. Carbamoyl phosphate-binding residues include arginine 103, histidine 131, and glutamine 134. L-aspartate-binding residues include arginine 163 and arginine 224. Carbamoyl phosphate is bound by residues leucine 263 and proline 264.

The protein belongs to the aspartate/ornithine carbamoyltransferase superfamily. ATCase family. As to quaternary structure, heterooligomer of catalytic and regulatory chains.

The catalysed reaction is carbamoyl phosphate + L-aspartate = N-carbamoyl-L-aspartate + phosphate + H(+). It functions in the pathway pyrimidine metabolism; UMP biosynthesis via de novo pathway; (S)-dihydroorotate from bicarbonate: step 2/3. In terms of biological role, catalyzes the condensation of carbamoyl phosphate and aspartate to form carbamoyl aspartate and inorganic phosphate, the committed step in the de novo pyrimidine nucleotide biosynthesis pathway. The chain is Aspartate carbamoyltransferase catalytic subunit from Halorubrum lacusprofundi (strain ATCC 49239 / DSM 5036 / JCM 8891 / ACAM 34).